The chain runs to 399 residues: Sperm equatorial segment protein 1 (399 aa).

The N-terminal stretch at 1–18 (MKLVVLVALWLWPSSLLA) is a signal peptide. N128 carries an N-linked (GlcNAc...) asparagine glycan. Positions 136-145 (EEPFIEKEPE) are enriched in basic and acidic residues. A disordered region spans residues 136–250 (EEPFIEKEPE…PSAEDLPGRH (115 aa)). The span at 157–167 (PEPELEPEPEP) shows a compositional bias: acidic residues. The segment covering 182–206 (VTSTTPNKELTGTSRISSMATQPAN) has biased composition (polar residues). The span at 207–225 (TQATRITVTVKTTSTMDVS) shows a compositional bias: low complexity.

The protein belongs to the SPESP1 family. In terms of processing, glycosylated. In testis there are two predominant forms of 77- and 67-kDa and a form of 47-kDa, whereas in epididymal sperm from caput, corpus, and cauda there are two forms of 47- and 43-kDa. Testis forms contain complex carbohydrate residues. Epididymal sperm forms are N-glycosylated. Then undergoes significant glycosylation in the testis and that the majority of these glycoconjugates are removed by the time sperm reach the caput epididymis. In terms of tissue distribution, testis specific.

It localises to the cytoplasmic vesicle. The protein localises to the secretory vesicle. The protein resides in the acrosome. In terms of biological role, involved in fertilization ability of sperm. The sequence is that of Sperm equatorial segment protein 1 from Mus musculus (Mouse).